Here is a 211-residue protein sequence, read N- to C-terminus: Ribonuclease T (211 aa).

An Exonuclease domain is found at 24-198 (VVVDVETGGF…YDAEKTAHLF (175 aa)). Mg(2+) is bound by residues D27, E29, H185, and D190. The Proton donor/acceptor role is filled by H185.

It belongs to the RNase T family. In terms of assembly, homodimer. It depends on Mg(2+) as a cofactor.

Its function is as follows. Trims short 3' overhangs of a variety of RNA species, leaving a one or two nucleotide 3' overhang. Responsible for the end-turnover of tRNA: specifically removes the terminal AMP residue from uncharged tRNA (tRNA-C-C-A). Also appears to be involved in tRNA biosynthesis. The sequence is that of Ribonuclease T from Xylella fastidiosa (strain Temecula1 / ATCC 700964).